Consider the following 2130-residue polypeptide: Dedicator of cytokinesis protein 7 (2130 aa).

Ser30 carries the phosphoserine modification. The segment at 137 to 175 is disordered; sequence GFNPNTLDKQKERQKGLPRQVFESDEAPDGSSYQDEQDD. Ser180 and Ser182 each carry phosphoserine. Residues 365-395 are a coiled coil; sequence FKEADATKNKEKLEKLKSQADQFCQRLGKYR. Lys381 is subject to N6-methyllysine. Position 450 is a phosphothreonine (Thr450). Ser452 carries the phosphoserine modification. Residues 561 to 727 enclose the C2 DOCK-type domain; that stretch reads RNLLYIYPQS…GVFNVEVVAV (167 aa). Phosphoserine is present on residues Ser862, Ser864, Ser882, Ser888, Ser896, Ser900, and Ser905. Low complexity predominate over residues 888-901; that stretch reads SLNLNRSRSLSNSN. Residues 888–966 form a disordered region; it reads SLNLNRSRSL…SCNRMSSHTE (79 aa). 2 positions are modified to phosphothreonine: Thr907 and Thr909. Ser910, Ser929, Ser963, Ser1382, Ser1420, Ser1422, Ser1424, and Ser1428 each carry phosphoserine. A compositionally biased stretch (polar residues) spans 942-966; the sequence is SNPSPSAESTQAMDRSCNRMSSHTE. Residues 1668 to 2104 form the DOCKER domain; sequence KGYQTSPDLR…LQPLINRKIP (437 aa). Lys1952 carries the post-translational modification N6-acetyllysine. Positions 2076 to 2102 form a coiled coil; that stretch reads DQKEYQRELERNYHRLKEALQPLINRK. Residue Ser2119 is modified to Phosphoserine.

This sequence belongs to the DOCK family. As to quaternary structure, component of the DOCK7-induced septin displacement/DISP complex, at least composed of DOCK7, LRCH3 and MYO6. Interacts with TSC1. Interacts with nucleotide-free RAC1 and RAC3. Interacts with TACC3. Interacts with CRY1. Interacts with NOD2.

It is found in the cell projection. It localises to the axon. Functions as a guanine nucleotide exchange factor (GEF), which activates Rac1 and Rac3 Rho small GTPases by exchanging bound GDP for free GTP. Does not have a GEF activity for CDC42. Required for STMN1 'Ser-15' phosphorylation during axon formation and consequently for neuronal polarization. As part of the DISP complex, may regulate the association of septins with actin and thereby regulate the actin cytoskeleton. Has a role in pigmentation. Involved in the regulation of cortical neurogenesis through the control of radial glial cells (RGCs) proliferation versus differentiation; negatively regulates the basal-to-apical interkinetic nuclear migration of RGCs by antagonizing the microtubule growth-promoting function of TACC3. The polypeptide is Dedicator of cytokinesis protein 7 (Dock7) (Mus musculus (Mouse)).